We begin with the raw amino-acid sequence, 656 residues long: Pheromone-regulated membrane protein 2 (656 aa).

4 helical membrane passes run 16–36 (FFSC…ILTI), 320–340 (IIFT…ERIL), 422–442 (WIIS…LIHW), and 634–654 (WGLL…FIIL).

The protein localises to the membrane. This chain is Pheromone-regulated membrane protein 2 (PRM2), found in Saccharomyces cerevisiae (strain ATCC 204508 / S288c) (Baker's yeast).